Consider the following 510-residue polypeptide: ATP synthase subunit alpha (510 aa).

169–176 (GDRQTGKT) lines the ATP pocket.

This sequence belongs to the ATPase alpha/beta chains family. In terms of assembly, F-type ATPases have 2 components, CF(1) - the catalytic core - and CF(0) - the membrane proton channel. CF(1) has five subunits: alpha(3), beta(3), gamma(1), delta(1), epsilon(1). CF(0) has three main subunits: a(1), b(2) and c(9-12). The alpha and beta chains form an alternating ring which encloses part of the gamma chain. CF(1) is attached to CF(0) by a central stalk formed by the gamma and epsilon chains, while a peripheral stalk is formed by the delta and b chains.

It is found in the cell inner membrane. The enzyme catalyses ATP + H2O + 4 H(+)(in) = ADP + phosphate + 5 H(+)(out). In terms of biological role, produces ATP from ADP in the presence of a proton gradient across the membrane. The alpha chain is a regulatory subunit. This Azorhizobium caulinodans (strain ATCC 43989 / DSM 5975 / JCM 20966 / LMG 6465 / NBRC 14845 / NCIMB 13405 / ORS 571) protein is ATP synthase subunit alpha.